A 1256-amino-acid polypeptide reads, in one-letter code: Centrosome and spindle pole-associated protein 1 (1256 aa).

Coiled coils occupy residues 38–62 (ADNL…LESD) and 114–135 (EDYE…RRYL). Residues 189 to 208 (GKEESSEKFRQVEKSTEPKS) are compositionally biased toward basic and acidic residues. Disordered stretches follow at residues 189–244 (GKEE…LTPS) and 381–403 (AENK…CSPF). Residues 222 to 232 (LTSQIQTSCEN) show a composition bias toward polar residues. A Phosphoserine modification is found at Ser244. A coiled-coil region spans residues 244–270 (SEAYEELLNQRRLEEDRYRQLDDEIEL). A coiled-coil region spans residues 417 to 449 (QRRKEKYRLELLEQMAEQQRNKRREKDLELRVA). Phosphoserine is present on residues Ser459 and Ser527. A coiled-coil region spans residues 625–669 (SKQSLQSYQEALQQQIREREERRKKEREEKEEYEAKLEAEMRTYN). Disordered stretches follow at residues 735–757 (ANKS…VFGE) and 813–853 (EYEE…KKEE). The segment covering 736-748 (NKSSGHMQTQSSP) has biased composition (polar residues). A phosphoserine mark is found at Ser901 and Ser920. The tract at residues 913–932 (SSMSRAQSPPVPARKNQLRA) is disordered. Residues 925–964 (ARKNQLRAEEEKKNVIMELSEMRKQLRSEERRLQERLLHM) are a coiled coil. Ser966 is subject to Phosphoserine. Disordered stretches follow at residues 1114-1147 (EDDV…RPNV) and 1232-1256 (LNQE…TAHG). A compositionally biased stretch (polar residues) spans 1246–1256 (FTWQGLSTAHG).

In terms of assembly, interacts with PLEKHG6. Interacts with ARMC9, TOGARAM1, CCDC66, CEP104 and CEP290. Post-translationally, phosphorylated. Phosphorylation increases in colcemide-treated cells. In terms of tissue distribution, expressed in adult and fetal brain with enrichment in the cerebellum. Detected in testis.

It is found in the cytoplasm. The protein resides in the cytoskeleton. It localises to the microtubule organizing center. Its subcellular location is the centrosome. The protein localises to the spindle. It is found in the spindle pole. The protein resides in the cell projection. It localises to the cilium. Its function is as follows. May play a role in cell-cycle-dependent microtubule organization. The polypeptide is Centrosome and spindle pole-associated protein 1 (CSPP1) (Homo sapiens (Human)).